We begin with the raw amino-acid sequence, 406 residues long: uncharacterized protein (406 aa).

It localises to the plastid. The protein localises to the chloroplast. This is an uncharacterized protein from Euglena gracilis.